Reading from the N-terminus, the 106-residue chain is Immunoglobulin lambda constant 7 (106 aa).

Positions 7–101 (PSVTLFPPSS…EGSTVEKTVA (95 aa)) constitute an Ig-like domain. Cys-28 and Cys-87 are oxidised to a cystine.

As to quaternary structure, immunoglobulins are composed of two identical heavy chains and two identical light chains; disulfide-linked.

It localises to the secreted. The protein resides in the cell membrane. In terms of biological role, constant region of immunoglobulin light chains. Immunoglobulins, also known as antibodies, are membrane-bound or secreted glycoproteins produced by B lymphocytes. In the recognition phase of humoral immunity, the membrane-bound immunoglobulins serve as receptors which, upon binding of a specific antigen, trigger the clonal expansion and differentiation of B lymphocytes into immunoglobulins-secreting plasma cells. Secreted immunoglobulins mediate the effector phase of humoral immunity, which results in the elimination of bound antigens. The antigen binding site is formed by the variable domain of one heavy chain, together with that of its associated light chain. Thus, each immunoglobulin has two antigen binding sites with remarkable affinity for a particular antigen. The variable domains are assembled by a process called V-(D)-J rearrangement and can then be subjected to somatic hypermutations which, after exposure to antigen and selection, allow affinity maturation for a particular antigen. The sequence is that of Immunoglobulin lambda constant 7 from Homo sapiens (Human).